Consider the following 681-residue polypeptide: DNA ligase (681 aa).

Residues 45 to 49 (DFDFD), 94 to 95 (SL), and Glu-120 each bind NAD(+). Lys-122 (N6-AMP-lysine intermediate) is an active-site residue. NAD(+) contacts are provided by Arg-143, Glu-177, Lys-289, and Lys-313. Residues Cys-403, Cys-406, Cys-421, and Cys-426 each contribute to the Zn(2+) site. One can recognise a BRCT domain in the interval 593 to 681 (SDQQPFAGQS…SLKINFKNTI (89 aa)).

This sequence belongs to the NAD-dependent DNA ligase family. LigA subfamily. Mg(2+) is required as a cofactor. The cofactor is Mn(2+).

It carries out the reaction NAD(+) + (deoxyribonucleotide)n-3'-hydroxyl + 5'-phospho-(deoxyribonucleotide)m = (deoxyribonucleotide)n+m + AMP + beta-nicotinamide D-nucleotide.. In terms of biological role, DNA ligase that catalyzes the formation of phosphodiester linkages between 5'-phosphoryl and 3'-hydroxyl groups in double-stranded DNA using NAD as a coenzyme and as the energy source for the reaction. It is essential for DNA replication and repair of damaged DNA. This chain is DNA ligase, found in Leptospira borgpetersenii serovar Hardjo-bovis (strain JB197).